A 219-amino-acid chain; its full sequence is Probable N-acetyltransferase camello (219 aa).

A run of 2 helical transmembrane segments spans residues 42–62 and 64–84; these read FYFI…SYVL and LTSL…EFHG. An N-acetyltransferase domain is found at 62–218; sequence LSLTSLVALL…TVIYYRYDIK (157 aa).

This sequence belongs to the camello family. In terms of tissue distribution, at the beginning of gastrulation, expressed in deep cells of the presumptive mesoderm. At later gastrulation stages, expressed at the interface between already involuted and preinvoluted mesoderm. At late neurula and tailbud stages, expressed in the deep mass of cells lying ventrally and laterally to the closed blastopore.

It localises to the golgi apparatus membrane. Plays a role in regulation of gastrulation, possibly by controlled reduction of cell adhesion which is necessary for optimal cell motility. This is Probable N-acetyltransferase camello from Xenopus laevis (African clawed frog).